Reading from the N-terminus, the 1071-residue chain is ATP-dependent helicase/deoxyribonuclease subunit B (1071 aa).

This sequence belongs to the helicase family. AddB/RexB type 2 subfamily. In terms of assembly, heterodimer of AddA and RexB. Requires Mg(2+) as cofactor.

Functionally, the heterodimer acts as both an ATP-dependent DNA helicase and an ATP-dependent, dual-direction single-stranded exonuclease. Recognizes the chi site generating a DNA molecule suitable for the initiation of homologous recombination. This subunit has 5' -&gt; 3' nuclease activity but not helicase activity. The protein is ATP-dependent helicase/deoxyribonuclease subunit B of Streptococcus pyogenes serotype M28 (strain MGAS6180).